The primary structure comprises 461 residues: Fumarate hydratase class II (461 aa).

Substrate contacts are provided by residues 98–100 (SGT), 129–132 (HPND), 139–141 (SSN), and threonine 187. The tract at residues 120 to 140 (SKKGGKSPVHPNDHVNKGQSS) is disordered. The active-site Proton donor/acceptor is the histidine 188. The active site involves serine 318. Residues serine 319 and 324-326 (KVN) contribute to the substrate site.

Belongs to the class-II fumarase/aspartase family. Fumarase subfamily. In terms of assembly, homotetramer.

It localises to the cytoplasm. It catalyses the reaction (S)-malate = fumarate + H2O. It functions in the pathway carbohydrate metabolism; tricarboxylic acid cycle; (S)-malate from fumarate: step 1/1. Its function is as follows. Involved in the TCA cycle. Catalyzes the stereospecific interconversion of fumarate to L-malate. The sequence is that of Fumarate hydratase class II from Rickettsia felis (strain ATCC VR-1525 / URRWXCal2) (Rickettsia azadi).